Reading from the N-terminus, the 117-residue chain is Large ribosomal subunit protein bL20 (117 aa).

Belongs to the bacterial ribosomal protein bL20 family.

In terms of biological role, binds directly to 23S ribosomal RNA and is necessary for the in vitro assembly process of the 50S ribosomal subunit. It is not involved in the protein synthesizing functions of that subunit. This is Large ribosomal subunit protein bL20 from Citrifermentans bemidjiense (strain ATCC BAA-1014 / DSM 16622 / JCM 12645 / Bem) (Geobacter bemidjiensis).